Here is a 378-residue protein sequence, read N- to C-terminus: Tafazzin (378 aa).

Residues 1–137 lie on the Mitochondrial intermembrane side of the membrane; the sequence is MFMVVCSNLR…RLRNPSKFWY (137 aa). The interval 46–112 is disordered; it reads APEARPVPDE…DQDADPSLDV (67 aa). Positions 51–67 are enriched in basic and acidic residues; that stretch reads PVPDERYPGSQQDRKDI. Residues 138-158 lie within the membrane without spanning it; that stretch reads VVSQFVVSAVGIFSKVVLMFL. Topologically, residues 159–378 are mitochondrial intermembrane; that stretch reads NKPRVYNRER…ETEKLHRERN (220 aa). The short motif at 188 to 193 is the HXXXXD motif element; it reads HYSCFD.

Belongs to the taffazin family. As to quaternary structure, associates with multiple protein complexes. Association with large protein complexes occurs only in the presence of cardiolipin.

Its subcellular location is the mitochondrion outer membrane. The protein resides in the mitochondrion inner membrane. The protein localises to the mitochondrion. It is found in the mitochondrion membrane. It localises to the golgi apparatus membrane. Its subcellular location is the endoplasmic reticulum membrane. It carries out the reaction 1'-[1,2-diacyl-sn-glycero-3-phospho],3'-[1-acyl-sn-glycero-3-phospho]-glycerol + a 1,2-diacyl-sn-glycero-3-phosphocholine = a cardiolipin + a 1-acyl-sn-glycero-3-phosphocholine. The catalysed reaction is 1'-[1,2-di-(9Z,12Z-octadecadienoyl)-sn-glycero-3-phospho]-3'-[1-(9Z,12Z-octadecadienoyl)-sn-glycero-3-phospho]-glycerol + 1-hexadecanoyl-2-(9Z,12Z-octadecadienoyl)-sn-glycero-3-phosphocholine = 1',3'-bis-[1,2-di-(9Z,12Z-octadecadienoyl)-sn-glycero-3-phospho]-glycerol + 1-hexadecanoyl-sn-glycero-3-phosphocholine. It catalyses the reaction 1'-[1,2-di-(9Z,12Z-octadecadienoyl)-sn-glycero-3-phospho]-3'-[2-(9Z,12Z-octadecadienoyl)-sn-glycero-3-phospho]-glycerol + 1-hexadecanoyl-2-(9Z,12Z-octadecadienoyl)-sn-glycero-3-phosphocholine = 1',3'-bis-[1,2-di-(9Z,12Z-octadecadienoyl)-sn-glycero-3-phospho]-glycerol + 1-hexadecanoyl-sn-glycero-3-phosphocholine. The enzyme catalyses 1,2-di-(9Z,12Z-octadecadienoyl)-sn-glycero-3-phosphocholine + 1'-[1,2-di-(9Z,12Z-octadecadienoyl)-sn-glycero-3-phospho]-3'-[1-(9Z,12Z-octadecadienoyl)-sn-glycero-3-phospho]-glycerol = 1-(9Z,12Z)-octadecadienoyl-sn-glycero-3-phosphocholine + 1',3'-bis-[1,2-di-(9Z,12Z-octadecadienoyl)-sn-glycero-3-phospho]-glycerol. It carries out the reaction 1-tetradecanoyl-sn-glycero-3-phosphocholine + 1',3'-bis-[1,2-di-(9Z,12Z-octadecadienoyl)-sn-glycero-3-phospho]-glycerol = 1-tetradecanoyl-2-(9Z,12Z-octadecadienoyl)-sn-glycero-3-phosphocholine + 1'-[1,2-di-(9Z,12Z-octadecadienoyl)-sn-glycero-3-phospho]-3'-[1-(9Z,12Z-octadecadienoyl)-sn-glycero-3-phospho]-glycerol. The catalysed reaction is 1',3'-bis[1,2-di-(9Z-octadecenoyl)-sn-glycero-3-phospho]-glycerol + 1-nonadecanoyl-sn-glycero-3-phosphocholine = 1-nonadecanoyl-2-(9Z-octadecenoyl)-sn-glycero-3-phosphocholine + 1'-[1,2-di-(9Z-octadecenoyl)-sn-glycero-3-phospho]-3'-[1-(9Z-octadecenoyl)-sn-glycero-3-phospho]-glycerol. It catalyses the reaction a 1,2-diacyl-sn-glycero-3-phospho-(1'-sn-glycerol) + a 1-acyl-sn-glycero-3-phosphocholine = 1-acyl-sn-glycero-3-phospho-(1'-sn-glycerol) + a 1,2-diacyl-sn-glycero-3-phosphocholine. The enzyme catalyses 1-hexadecanoyl-2-(9Z,12Z-octadecadienoyl)-sn-glycero-3-phospho-(1'-sn-glycerol) + 1-hexadecanoyl-sn-glycero-3-phosphocholine = 1-hexadecanoyl-sn-glycero-3-phospho-(1'-sn-glycerol) + 1-hexadecanoyl-2-(9Z,12Z-octadecadienoyl)-sn-glycero-3-phosphocholine. It carries out the reaction 1,2-di-(9Z-octadecenoyl)-sn-glycero-3-phospho-(1'-sn-glycerol) + 1-nonadecanoyl-sn-glycero-3-phosphocholine = 1-nonadecanoyl-2-(9Z-octadecenoyl)-sn-glycero-3-phosphocholine + 1-(9Z-octadecenoyl)-sn-glycero-3-phospho-(1'-sn-glycerol). The catalysed reaction is a 1,2-diacyl-sn-glycero-3-phosphate + a 1-acyl-sn-glycero-3-phosphocholine = a 1-acyl-sn-glycero-3-phosphate + a 1,2-diacyl-sn-glycero-3-phosphocholine. It catalyses the reaction 1-hexadecanoyl-2-(9Z,12Z-octadecadienoyl)-sn-glycero-3-phosphate + 1-hexadecanoyl-sn-glycero-3-phosphocholine = 1-hexadecanoyl-2-(9Z,12Z-octadecadienoyl)-sn-glycero-3-phosphocholine + 1-hexadecanoyl-sn-glycero-3-phosphate. The enzyme catalyses 1-hexadecanoyl-2-(9Z,12Z-octadecadienoyl)-sn-glycero-3-phosphocholine + 1-(9Z-octadecenoyl)-sn-glycero-3-phosphate = 1-(9Z)-octadecenoyl-2-(9Z,12Z)-octadecadienoyl-sn-glycero-3-phosphate + 1-hexadecanoyl-sn-glycero-3-phosphocholine. It carries out the reaction a 1-acyl-sn-glycero-3-phosphocholine + a 1,2-diacyl-sn-glycero-3-phosphoethanolamine = a 1-acyl-sn-glycero-3-phosphoethanolamine + a 1,2-diacyl-sn-glycero-3-phosphocholine. The catalysed reaction is 1-hexadecanoyl-2-(9Z,12Z-octadecadienoyl)-sn-glycero-3-phosphoethanolamine + 1-hexadecanoyl-sn-glycero-3-phosphocholine = 1-hexadecanoyl-2-(9Z,12Z-octadecadienoyl)-sn-glycero-3-phosphocholine + 1-hexadecanoyl-sn-glycero-3-phosphoethanolamine. It catalyses the reaction 1,2-di-(9Z,12Z-octadecadienoyl)-sn-glycero-3-phosphoethanolamine + 1-tetradecanoyl-sn-glycero-3-phosphocholine = 1-(9Z,12Z-octadecadienoyl)-sn-glycero-3-phosphoethanolamine + 1-tetradecanoyl-2-(9Z,12Z-octadecadienoyl)-sn-glycero-3-phosphocholine. The enzyme catalyses 1'-[1,2-diacyl-sn-glycero-3-phospho],3'-[1-acyl-sn-glycero-3-phospho]-glycerol + a 1,2-diacyl-sn-glycero-3-phosphoethanolamine = a cardiolipin + a 1-acyl-sn-glycero-3-phosphoethanolamine. It carries out the reaction 1-hexadecanoyl-2-(9Z,12Z-octadecadienoyl)-sn-glycero-3-phosphoethanolamine + 1'-[1,2-di-(9Z,12Z-octadecadienoyl)-sn-glycero-3-phospho]-3'-[1-(9Z,12Z-octadecadienoyl)-sn-glycero-3-phospho]-glycerol = 1',3'-bis-[1,2-di-(9Z,12Z-octadecadienoyl)-sn-glycero-3-phospho]-glycerol + 1-hexadecanoyl-sn-glycero-3-phosphoethanolamine. The catalysed reaction is 1'-[1-(9Z,12Z-octadecadienoyl)-2-(9Z-octadecenoyl)-sn-glycero-3-phospho]-3'-[1-(9Z,12Z-octadecadienoyl)-sn-glycero-3-phospho]-glycerol + 1',3'-bis-[1,2-di-(9Z,12Z-octadecadienoyl)-sn-glycero-3-phospho]-glycerol = 1'-[1,2-di-(9Z,12Z-octadecadienoyl)-sn-glycero-3-phospho]-3'-[1-(9Z,12Z-octadecadienoyl)-2-(9Z-octadecenoyl)-sn-glycero-3-phospho]-glycerol + 1'-[1,2-di-(9Z,12Z-octadecadienoyl)-sn-glycero-3-phospho]-3'-[1-(9Z,12Z-octadecadienoyl)-sn-glycero-3-phospho]-glycerol. It catalyses the reaction 1,2-di-(9Z-hexadecenoyl)-sn-glycero-3-phosphocholine + 1-hexadecanoyl-sn-glycero-3-phosphocholine = 1-hexadecanoyl-2-(9Z-hexadecenoyl)-sn-glycero-3-phosphocholine + 1-(9Z-hexadecenoyl)-sn-glycero-3-phosphocholine. The enzyme catalyses 1,2-dioctadecanoyl-sn-glycero-3-phosphocholine + 1-hexadecanoyl-sn-glycero-3-phosphocholine = 1-hexadecanoyl-2-octadecanoyl-sn-glycero-3-phosphocholine + 1-octadecanoyl-sn-glycero-3-phosphocholine. It carries out the reaction 1,2-di-(9Z-octadecenoyl)-sn-glycero-3-phosphocholine + 1-hexadecanoyl-sn-glycero-3-phosphocholine = 1-hexadecanoyl-2-(9Z-octadecenoyl)-sn-glycero-3-phosphocholine + 1-(9Z-octadecenoyl)-sn-glycero-3-phosphocholine. The catalysed reaction is 1,2-di-(9Z,12Z-octadecadienoyl)-sn-glycero-3-phosphocholine + 1-(9Z-octadecenoyl)-sn-glycero-3-phosphocholine = 1-(9Z)-octadecenoyl-2-(9Z,12Z)-octadecadienoyl-sn-glycero-3-phosphocholine + 1-(9Z,12Z)-octadecadienoyl-sn-glycero-3-phosphocholine. It catalyses the reaction 1,2-di-(9Z,12Z,15Z-octadecatrienoyl)-sn-glycero-3-phosphocholine + 1-tetradecanoyl-sn-glycero-3-phosphocholine = 1-tetradecanoyl-2-(9Z,12Z,15Z-octadecatrienoyl)-sn-glycero-3-phosphocholine + 1-(9Z,12Z,15Z-octadecatrienoyl)-sn-glycero-3-phosphocholine. The enzyme catalyses 1-nonadecanoyl-sn-glycero-3-phosphocholine + 1-octadecanoyl-2-(9Z-octadecenoyl)-sn-glycero-3-phosphocholine = 1-nonadecanoyl-2-(9Z-octadecenoyl)-sn-glycero-3-phosphocholine + 1-octadecanoyl-sn-glycero-3-phosphocholine. It carries out the reaction 1-(9Z)-octadecenoyl-2-octadecanoyl-sn-glycero-3-phosphocholine + 1-nonadecanoyl-sn-glycero-3-phosphocholine = 2-octadecanoyl-sn-glycero-3-phosphocholine + 1-nonadecanoyl-2-(9Z-octadecenoyl)-sn-glycero-3-phosphocholine. It participates in phospholipid metabolism. In terms of biological role, acyltransferase required to remodel newly synthesized phospholipid cardiolipin (1',3'-bis-[1,2-diacyl-sn-glycero-3-phospho]-glycerol or CL), a key component of the mitochondrial inner membrane, with tissue specific acyl chains necessary for adequate mitochondrial function. Its role in cellular physiology is to improve mitochondrial performance. CL is critical for the coassembly of lipids and proteins in mitochondrial membranes. For instance, remodeling of the acyl groups of CL in the mitochondrial inner membrane affects the assembly and stability of respiratory chain complex IV and its supercomplex forms. Catalyzes the transacylation between phospholipids and lysophospholipids, with the highest rate being between phosphatidylcholine (1,2-diacyl-sn-glycero-3-phosphocholine or PC) and CL. Catalyzes both 1-acyl-sn-glycero-3-phosphocholine (lysophosphatidylcholine or LPC) reacylation and PC-CL transacylation, that means, it exchanges acyl groups between CL and PC by a combination of forward and reverse transacylations. Also catalyzes transacylations between other phospholipids such as phosphatidylethanolamine (1,2-diacyl-sn-glycero-3-phosphoethanolamine or PE) and CL, between PC and PE, and between PC and phosphatidate (1,2-diacyl-sn-glycero-3-phosphate or PA), although at lower rate. Not regiospecific, it transfers acyl groups into any of the sn-1 and sn-2 positions of the monolysocardiolipin (MLCL), which is an important prerequisite for uniformity and symmetry in CL acyl distribution. Cannot transacylate dilysocardiolipin (DLCL), thus, the role of MLCL is limited to that of an acyl acceptor. CoA-independent, it can reshuffle molecular species within a single phospholipid class. Redistributes fatty acids between MLCL, CL, and other lipids, which prolongs the half-life of CL. Its action is completely reversible, which allows for cyclic changes, such as fission and fusion or bending and flattening of the membrane. Hence, by contributing to the flexibility of the lipid composition, it plays an important role in the dynamics of mitochondria membranes. Essential for the final stage of spermatogenesis, spermatid individualization. Required for the initiation of mitophagy. This chain is Tafazzin, found in Drosophila melanogaster (Fruit fly).